Here is a 544-residue protein sequence, read N- to C-terminus: Chaperonin GroEL 3 (544 aa).

ATP is bound by residues 30–33, Lys-51, 87–91, Gly-415, and Asp-495; these read TLGP and DGTTT.

It belongs to the chaperonin (HSP60) family. As to quaternary structure, forms a cylinder of 14 subunits composed of two heptameric rings stacked back-to-back. Interacts with the co-chaperonin GroES.

Its subcellular location is the cytoplasm. The enzyme catalyses ATP + H2O + a folded polypeptide = ADP + phosphate + an unfolded polypeptide.. In terms of biological role, together with its co-chaperonin GroES, plays an essential role in assisting protein folding. The GroEL-GroES system forms a nano-cage that allows encapsulation of the non-native substrate proteins and provides a physical environment optimized to promote and accelerate protein folding. In Psychromonas ingrahamii (strain DSM 17664 / CCUG 51855 / 37), this protein is Chaperonin GroEL 3.